A 254-amino-acid polypeptide reads, in one-letter code: Glutathione S-transferase F14 (254 aa).

Residues 4-85 (SKMKLHCGFI…YLAEQYKDVG (82 aa)) form the GST N-terminal domain. Glutathione-binding positions include 42 to 43 (AK), 56 to 57 (EV), and 69 to 70 (EP). Residues 92 to 231 (DPKKRAIMSM…DLMKQRRLPI (140 aa)) enclose the GST C-terminal domain.

Belongs to the GST superfamily. Phi family.

It localises to the cytoplasm. The protein resides in the cytosol. It catalyses the reaction RX + glutathione = an S-substituted glutathione + a halide anion + H(+). Its function is as follows. May be involved in the conjugation of reduced glutathione to a wide number of exogenous and endogenous hydrophobic electrophiles and have a detoxification role against certain herbicides. In Arabidopsis thaliana (Mouse-ear cress), this protein is Glutathione S-transferase F14.